Consider the following 403-residue polypeptide: Argininosuccinate synthase (403 aa).

10–18 (AYSGGLDTS) contributes to the ATP binding site. Y87 is an L-citrulline binding site. G117 contributes to the ATP binding site. Positions 119, 123, and 124 each coordinate L-aspartate. An L-citrulline-binding site is contributed by N123. R127, S175, E260, and Y272 together coordinate L-citrulline.

It belongs to the argininosuccinate synthase family. Type 1 subfamily. In terms of assembly, homotetramer.

The protein localises to the cytoplasm. It catalyses the reaction L-citrulline + L-aspartate + ATP = 2-(N(omega)-L-arginino)succinate + AMP + diphosphate + H(+). It functions in the pathway amino-acid biosynthesis; L-arginine biosynthesis; L-arginine from L-ornithine and carbamoyl phosphate: step 2/3. This chain is Argininosuccinate synthase, found in Bacillus velezensis (strain DSM 23117 / BGSC 10A6 / LMG 26770 / FZB42) (Bacillus amyloliquefaciens subsp. plantarum).